The chain runs to 1717 residues: Protein MON2 homolog (1717 aa).

Ser2 carries the N-acetylserine modification. Phosphoserine occurs at positions 205 and 537. The interval Glu511–Asp538 is disordered. Positions Ser522 to Asp538 are enriched in polar residues.

Belongs to the MON2 family. In terms of assembly, homooligomer. Heterotrimer with ATP9A and DOP1B; this interaction is retromer-independent. Interacts with SNX3.

The protein localises to the early endosome membrane. Plays a role in regulating membrane trafficking of cargo proteins. Together with ATP9A and DOP1B, regulates SNX3 retromer-mediated endosomal sorting of WLS away from lysosomal degradation. The protein is Protein MON2 homolog of Homo sapiens (Human).